The primary structure comprises 332 residues: Nuclear migration protein nudC (332 aa).

The tract at residues 122 to 161 (RQQLLDSAGGEPSASNRDGISKPIEKVDDESDKSELGKLM) is disordered. The 92-residue stretch at 168 to 259 (CTLENYTWTQ…NKMNWWSRLV (92 aa)) folds into the CS domain.

The protein belongs to the nudC family. Interacts with PCID2.

Its subcellular location is the cytoplasm. Its function is as follows. Chaperone protein with functions in nuclear localization and cytoplasmic mRNA trafficking. In postmitotic neurons, acts with nudE downstream of dar1 to ensure correct positioning of the nuclei in primary dendrites and as a consequence, is required for determining multipolar neuron morphology. Stabilizes PCID2 in the cytoplasm and thereby is required for promoting cytoplasmic mRNA trafficking. In Drosophila melanogaster (Fruit fly), this protein is Nuclear migration protein nudC.